Here is a 492-residue protein sequence, read N- to C-terminus: Ribulose bisphosphate carboxylase large chain (492 aa).

Positions 131 and 181 each coordinate substrate. The Proton acceptor role is filled by Lys183. Lys185 is a substrate binding site. The Mg(2+) site is built by Lys209, Asp211, and Glu212. Lys209 carries the N6-carboxylysine modification. Catalysis depends on His301, which acts as the Proton acceptor. Positions 302, 334, and 386 each coordinate substrate.

It belongs to the RuBisCO large chain family. Type I subfamily. As to quaternary structure, heterohexadecamer of 8 large chains and 8 small chains. Requires Mg(2+) as cofactor.

It carries out the reaction 2 (2R)-3-phosphoglycerate + 2 H(+) = D-ribulose 1,5-bisphosphate + CO2 + H2O. The enzyme catalyses D-ribulose 1,5-bisphosphate + O2 = 2-phosphoglycolate + (2R)-3-phosphoglycerate + 2 H(+). RuBisCO catalyzes two reactions: the carboxylation of D-ribulose 1,5-bisphosphate, the primary event in carbon dioxide fixation, as well as the oxidative fragmentation of the pentose substrate. Both reactions occur simultaneously and in competition at the same active site. The chain is Ribulose bisphosphate carboxylase large chain from Nitrosococcus oceani (strain ATCC 19707 / BCRC 17464 / JCM 30415 / NCIMB 11848 / C-107).